Here is a 389-residue protein sequence, read N- to C-terminus: Probable peptide chain release factor 1, mitochondrial (389 aa).

The residue at position 259 (Gln259) is an N5-methylglutamine.

It belongs to the prokaryotic/mitochondrial release factor family. In terms of processing, methylation of glutamine in the GGQ triplet is conserved from bacteria to mammals.

It localises to the mitochondrion. Functionally, mitochondrial peptide chain release factor that directs the termination of translation in response to the peptide chain termination codons UAA and UAG. In Caenorhabditis elegans, this protein is Probable peptide chain release factor 1, mitochondrial.